The chain runs to 392 residues: Casein kinase II subunit alpha (392 aa).

Residues 39–324 (YQLVRKLGRG…AREAMDHPYF (286 aa)) enclose the Protein kinase domain. ATP contacts are provided by residues 45-53 (LGRGKYSEV) and Lys68. The active-site Proton acceptor is the Asp156. The segment at 334–355 (MGGSNMPSGSSTPVSSASMMSG) is disordered. The span at 337 to 354 (SNMPSGSSTPVSSASMMS) shows a compositional bias: low complexity.

The protein belongs to the protein kinase superfamily. Ser/Thr protein kinase family. CK2 subfamily. As to quaternary structure, tetramer composed of an alpha chain, an alpha' and two beta chains.

It localises to the nucleus. The enzyme catalyses L-seryl-[protein] + ATP = O-phospho-L-seryl-[protein] + ADP + H(+). It carries out the reaction L-threonyl-[protein] + ATP = O-phospho-L-threonyl-[protein] + ADP + H(+). Functionally, catalytic subunit of a constitutively active serine/threonine-protein kinase complex that phosphorylates a large number of substrates containing acidic residues C-terminal to the phosphorylated serine or threonine. Regulates numerous cellular processes, such as cell cycle progression, apoptosis and transcription, as well as viral infection. May act as a regulatory node which integrates and coordinates numerous signals leading to an appropriate cellular response. During mitosis, functions as a component of the p53/TP53-dependent spindle assembly checkpoint (SAC) that maintains cyclin-B-CDK1 activity and G2 arrest in response to spindle damage. Can also negatively regulate apoptosis. Phosphorylates the caspases CASP9 and CASP2 and the apoptotic regulator NOL3. Phosphorylation protects CASP9 from cleavage and activation by CASP8, and inhibits the dimerization of CASP2 and activation of CASP8. Plays an important role in the circadian clock function by phosphorylating BMAL1. This chain is Casein kinase II subunit alpha (csnk2a1), found in Xenopus laevis (African clawed frog).